We begin with the raw amino-acid sequence, 617 residues long: Membrane protein insertase YidC (617 aa).

The helical transmembrane segment at 8–28 threads the bilayer; it reads MFVAIGLSLLVLLGWQYFVAG. The segment covering 36–49 has biased composition (polar residues); sequence QIEAQNKAAQQQPP. Residues 36 to 91 form a disordered region; the sequence is QIEAQNKAAQQQPPGVTPDGVPSPSPKEGGPAAPAPGTLPTAQGGPVSREAALARS. Residues 61–81 are compositionally biased toward low complexity; it reads PKEGGPAAPAPGTLPTAQGGP. Helical transmembrane passes span 387–407, 461–481, 517–533, and 549–569; these read LFGN…LLFL, WPVL…FITI, FVHL…TMFV, and IFTF…AGLV.

Belongs to the OXA1/ALB3/YidC family. Type 1 subfamily. In terms of assembly, interacts with the Sec translocase complex via SecD. Specifically interacts with transmembrane segments of nascent integral membrane proteins during membrane integration.

It localises to the cell inner membrane. Required for the insertion and/or proper folding and/or complex formation of integral membrane proteins into the membrane. Involved in integration of membrane proteins that insert both dependently and independently of the Sec translocase complex, as well as at least some lipoproteins. Aids folding of multispanning membrane proteins. The chain is Membrane protein insertase YidC from Methylobacterium radiotolerans (strain ATCC 27329 / DSM 1819 / JCM 2831 / NBRC 15690 / NCIMB 10815 / 0-1).